An 812-amino-acid polypeptide reads, in one-letter code: Phenylalanine--tRNA ligase beta subunit (812 aa).

The tRNA-binding domain maps to 39-155 (SKTFAPFTIA…ADAPVGAGYA (117 aa)). A B5 domain is found at 405–480 (PEDRVIDFPL…RIVGVDKVPM (76 aa)). Mg(2+)-binding residues include aspartate 458, aspartate 464, glutamate 467, and glutamate 468. The region spanning 718 to 811 (PAFQPVSRDF…VAKRTGGSLR (94 aa)) is the FDX-ACB domain.

The protein belongs to the phenylalanyl-tRNA synthetase beta subunit family. Type 1 subfamily. As to quaternary structure, tetramer of two alpha and two beta subunits. Mg(2+) is required as a cofactor.

Its subcellular location is the cytoplasm. It carries out the reaction tRNA(Phe) + L-phenylalanine + ATP = L-phenylalanyl-tRNA(Phe) + AMP + diphosphate + H(+). In Nitrobacter winogradskyi (strain ATCC 25391 / DSM 10237 / CIP 104748 / NCIMB 11846 / Nb-255), this protein is Phenylalanine--tRNA ligase beta subunit.